Here is a 157-residue protein sequence, read N- to C-terminus: Glutathione peroxidase (157 aa).

The active site involves C35.

It belongs to the glutathione peroxidase family.

The catalysed reaction is 2 glutathione + H2O2 = glutathione disulfide + 2 H2O. The polypeptide is Glutathione peroxidase (gpo) (Lactococcus lactis subsp. cremoris (strain MG1363)).